Reading from the N-terminus, the 239-residue chain is Peptidyl-tRNA hydrolase (239 aa).

A tRNA-binding site is contributed by tyrosine 14. Histidine 19 serves as the catalytic Proton acceptor. 3 residues coordinate tRNA: phenylalanine 64, asparagine 66, and asparagine 112. Positions 199 to 227 (EKPAQKGRSHIRQARPKAPPAELPSSGPM) are disordered. Residues 203-213 (QKGRSHIRQAR) show a composition bias toward basic residues.

It belongs to the PTH family. As to quaternary structure, monomer.

The protein resides in the cytoplasm. It catalyses the reaction an N-acyl-L-alpha-aminoacyl-tRNA + H2O = an N-acyl-L-amino acid + a tRNA + H(+). Functionally, hydrolyzes ribosome-free peptidyl-tRNAs (with 1 or more amino acids incorporated), which drop off the ribosome during protein synthesis, or as a result of ribosome stalling. In terms of biological role, catalyzes the release of premature peptidyl moieties from peptidyl-tRNA molecules trapped in stalled 50S ribosomal subunits, and thus maintains levels of free tRNAs and 50S ribosomes. This chain is Peptidyl-tRNA hydrolase, found in Chelativorans sp. (strain BNC1).